A 306-amino-acid chain; its full sequence is Curved DNA-binding protein (306 aa).

Positions 5-69 constitute a J domain; sequence DYYAIMGVKP…QRRAEYDQMW (65 aa).

It localises to the cytoplasm. The protein resides in the nucleoid. Its function is as follows. DNA-binding protein that preferentially recognizes a curved DNA sequence. It is probably a functional analog of DnaJ; displays overlapping activities with DnaJ, but functions under different conditions, probably acting as a molecular chaperone in an adaptive response to environmental stresses other than heat shock. Lacks autonomous chaperone activity; binds native substrates and targets them for recognition by DnaK. Its activity is inhibited by the binding of CbpM. The sequence is that of Curved DNA-binding protein from Shigella dysenteriae serotype 1 (strain Sd197).